Consider the following 89-residue polypeptide: UPF0297 protein SEQ_2150 (89 aa).

This sequence belongs to the UPF0297 family.

This Streptococcus equi subsp. equi (strain 4047) protein is UPF0297 protein SEQ_2150.